An 84-amino-acid chain; its full sequence is Small ribosomal subunit protein uS17 (84 aa).

The protein belongs to the universal ribosomal protein uS17 family. As to quaternary structure, part of the 30S ribosomal subunit.

In terms of biological role, one of the primary rRNA binding proteins, it binds specifically to the 5'-end of 16S ribosomal RNA. The chain is Small ribosomal subunit protein uS17 from Clostridium botulinum (strain Eklund 17B / Type B).